The chain runs to 216 residues: Probable nicotinate-nucleotide adenylyltransferase (216 aa).

Belongs to the NadD family.

It carries out the reaction nicotinate beta-D-ribonucleotide + ATP + H(+) = deamido-NAD(+) + diphosphate. It functions in the pathway cofactor biosynthesis; NAD(+) biosynthesis; deamido-NAD(+) from nicotinate D-ribonucleotide: step 1/1. Functionally, catalyzes the reversible adenylation of nicotinate mononucleotide (NaMN) to nicotinic acid adenine dinucleotide (NaAD). The protein is Probable nicotinate-nucleotide adenylyltransferase of Citrifermentans bemidjiense (strain ATCC BAA-1014 / DSM 16622 / JCM 12645 / Bem) (Geobacter bemidjiensis).